Consider the following 107-residue polypeptide: Antimicrobial peptide damicornin (107 aa).

The first 22 residues, 1 to 22 (MKVLVILFGAMLVLMEFQKASA), serve as a signal peptide directing secretion. Residues 23 to 67 (ATLLEDFDDDDDLLDDGGDFDLEANSDASSGNGNDSNDAVPEKRR) constitute a propeptide that is removed on maturation. The segment covering 37-46 (DDGGDFDLEA) has biased composition (acidic residues). Residues 37–62 (DDGGDFDLEANSDASSGNGNDSNDAV) form a disordered region. Residues 47–61 (NSDASSGNGNDSNDA) are compositionally biased toward low complexity. Intrachain disulfides connect Cys-69/Cys-105, Cys-78/Cys-99, and Cys-85/Cys-103. Arginine amide is present on Arg-106.

It belongs to the coral AMP family. Is specifically expressed in the granular cells of the ectoderm.

The protein localises to the cytoplasm. The protein resides in the stress granule. Its subcellular location is the secreted. Functionally, cationic peptide with probable antimicrobial activity against coral pathogens. Shows in vitro activity against Gram-positive bacteria and the filamentous fungus F.oxysporum (MIC=1.25 uM). Gram-positive bacteria tested are B.megaterium (MIC=20 uM), S.aureus (MIC=5 uM), M. luteus (MIC=1.25 uM), B.stationis (MIC=10 uM), M.maritypicum (MIC=20 uM). Has no or little effect against Gram-negative bacteria (the coral pathogen V.coralliilyticus (MIC&gt;20 uM), V.aesturianus (MIC&gt;20 uM), V.shiloi (MIC&gt;20 uM), and E.coli (MIC=10 uM)). Has no hemolytic activity against sheep erythrocytes. The protein is Antimicrobial peptide damicornin of Pocillopora damicornis (Cauliflower coral).